Consider the following 206-residue polypeptide: MRLILLGPPGAGKGTQAQRLVHHYGIIQLSTGDMLRAAVAAGTPVGLKAKDIMASGGLVPDDVVIGIISDRLEQADAKDGFILDGFPRTVPQAEALDILLQSKNLALDAVIELRVDESALLQRVENRVAETTARGEQVRADDNPEVLSQRLASYRALTEPLIRYYSERGRLLTVDGMMAIDDVTRDIRRVLRRSGVPMSKFGVRRW.

10-15 (GAGKGT) contributes to the ATP binding site. Positions 30–59 (STGDMLRAAVAAGTPVGLKAKDIMASGGLV) are NMP. AMP is bound by residues T31, R36, 57 to 59 (GLV), 85 to 88 (GFPR), and Q92. The tract at residues 126-142 (NRVAETTARGEQVRADD) is LID. R127 is a binding site for ATP. 2 residues coordinate AMP: R139 and R150. M178 is an ATP binding site.

Belongs to the adenylate kinase family. Monomer.

The protein localises to the cytoplasm. The catalysed reaction is AMP + ATP = 2 ADP. It functions in the pathway purine metabolism; AMP biosynthesis via salvage pathway; AMP from ADP: step 1/1. Functionally, catalyzes the reversible transfer of the terminal phosphate group between ATP and AMP. Plays an important role in cellular energy homeostasis and in adenine nucleotide metabolism. This is Adenylate kinase from Nitrobacter winogradskyi (strain ATCC 25391 / DSM 10237 / CIP 104748 / NCIMB 11846 / Nb-255).